We begin with the raw amino-acid sequence, 338 residues long: D-erythrose-4-phosphate dehydrogenase (338 aa).

11 to 12 (RI) contributes to the NAD(+) binding site. Residues 153-155 (SCT), Arg199, 212-213 (TK), and Arg235 contribute to the substrate site. Cys154 acts as the Nucleophile in catalysis. Asn317 serves as a coordination point for NAD(+).

The protein belongs to the glyceraldehyde-3-phosphate dehydrogenase family. Epd subfamily. As to quaternary structure, homotetramer.

It is found in the cytoplasm. The catalysed reaction is D-erythrose 4-phosphate + NAD(+) + H2O = 4-phospho-D-erythronate + NADH + 2 H(+). It functions in the pathway cofactor biosynthesis; pyridoxine 5'-phosphate biosynthesis; pyridoxine 5'-phosphate from D-erythrose 4-phosphate: step 1/5. Functionally, catalyzes the NAD-dependent conversion of D-erythrose 4-phosphate to 4-phosphoerythronate. The chain is D-erythrose-4-phosphate dehydrogenase from Shewanella baltica (strain OS223).